Here is a 598-residue protein sequence, read N- to C-terminus: Probable translation initiation factor IF-2 (598 aa).

Positions 3–225 constitute a tr-type G domain; that stretch reads LRCPIVSVLG…GLAQKFLEQK (223 aa). The tract at residues 12–19 is G1; that stretch reads GHVDHGKT. Residue 12–19 coordinates GTP; that stretch reads GHVDHGKT. Residues 37 to 41 form a G2 region; that stretch reads GITQH. Residues 76–79 form a G3 region; sequence DTPG. GTP-binding positions include 76–80 and 130–133; these read DTPGH and NKLD. The interval 130–133 is G4; the sequence is NKLD. Residues 200 to 202 form a G5 region; it reads SAM.

It belongs to the TRAFAC class translation factor GTPase superfamily. Classic translation factor GTPase family. IF-2 subfamily.

Functionally, function in general translation initiation by promoting the binding of the formylmethionine-tRNA to ribosomes. Seems to function along with eIF-2. The sequence is that of Probable translation initiation factor IF-2 from Methanococcus maripaludis (strain C6 / ATCC BAA-1332).